We begin with the raw amino-acid sequence, 206 residues long: Pyridoxine/pyridoxamine 5'-phosphate oxidase (206 aa).

Residues 53 to 58, 68 to 69, lysine 75, and glutamine 97 contribute to the FMN site; these read RMVLLK and YT. Lysine 58 lines the substrate pocket. Positions 115, 119, and 123 each coordinate substrate. Residues 132–133 and tryptophan 177 each bind FMN; that span reads QS. Substrate is bound at residue 183 to 185; sequence RLH. An FMN-binding site is contributed by arginine 187.

The protein belongs to the pyridoxamine 5'-phosphate oxidase family. Homodimer. Requires FMN as cofactor.

The catalysed reaction is pyridoxamine 5'-phosphate + O2 + H2O = pyridoxal 5'-phosphate + H2O2 + NH4(+). It catalyses the reaction pyridoxine 5'-phosphate + O2 = pyridoxal 5'-phosphate + H2O2. Its pathway is cofactor metabolism; pyridoxal 5'-phosphate salvage; pyridoxal 5'-phosphate from pyridoxamine 5'-phosphate: step 1/1. The protein operates within cofactor metabolism; pyridoxal 5'-phosphate salvage; pyridoxal 5'-phosphate from pyridoxine 5'-phosphate: step 1/1. Catalyzes the oxidation of either pyridoxine 5'-phosphate (PNP) or pyridoxamine 5'-phosphate (PMP) into pyridoxal 5'-phosphate (PLP). The protein is Pyridoxine/pyridoxamine 5'-phosphate oxidase of Rhizobium etli (strain CIAT 652).